Consider the following 691-residue polypeptide: DNA ligase (691 aa).

NAD(+) contacts are provided by residues 41 to 45 (DAEYD), 90 to 91 (SL), and E130. K132 serves as the catalytic N6-AMP-lysine intermediate. R153, E190, K307, and K331 together coordinate NAD(+). Positions 425, 428, 443, and 449 each coordinate Zn(2+). In terms of domain architecture, BRCT spans 610 to 691 (APQGVLAGKT…LHQLLEGNTQ (82 aa)).

Belongs to the NAD-dependent DNA ligase family. LigA subfamily. Mg(2+) is required as a cofactor. The cofactor is Mn(2+).

The catalysed reaction is NAD(+) + (deoxyribonucleotide)n-3'-hydroxyl + 5'-phospho-(deoxyribonucleotide)m = (deoxyribonucleotide)n+m + AMP + beta-nicotinamide D-nucleotide.. DNA ligase that catalyzes the formation of phosphodiester linkages between 5'-phosphoryl and 3'-hydroxyl groups in double-stranded DNA using NAD as a coenzyme and as the energy source for the reaction. It is essential for DNA replication and repair of damaged DNA. This is DNA ligase from Burkholderia vietnamiensis (strain G4 / LMG 22486) (Burkholderia cepacia (strain R1808)).